Consider the following 182-residue polypeptide: UPF0398 protein lwe1908 (182 aa).

The protein belongs to the UPF0398 family.

The polypeptide is UPF0398 protein lwe1908 (Listeria welshimeri serovar 6b (strain ATCC 35897 / DSM 20650 / CCUG 15529 / CIP 8149 / NCTC 11857 / SLCC 5334 / V8)).